Here is a 141-residue protein sequence, read N- to C-terminus: Arsenate reductase (141 aa).

Residue Cys-12 is the Nucleophile; cysteine thioarsenate intermediate of the active site.

This sequence belongs to the ArsC family.

It carries out the reaction [glutaredoxin]-dithiol + arsenate + glutathione + H(+) = glutathionyl-S-S-[glutaredoxin] + arsenite + H2O. In terms of biological role, involved in resistance to arsenate. Catalyzes the reduction of arsenate [As(V)] to arsenite [As(III)]. The polypeptide is Arsenate reductase (Escherichia coli).